A 290-amino-acid chain; its full sequence is UPF0750 membrane protein YpjC (290 aa).

6 helical membrane-spanning segments follow: residues 9-29 (NIFF…HFNM), 47-67 (ALFH…IFFI), 75-95 (TMFV…SIFQ), 106-126 (DLAL…GIIF), 146-166 (FGIP…ILSL), and 179-199 (LVAV…GYAA).

The protein belongs to the UPF0750 family.

It localises to the cell membrane. In Bacillus subtilis (strain 168), this protein is UPF0750 membrane protein YpjC (ypjC).